Consider the following 481-residue polypeptide: 2-succinylbenzoate--CoA ligase (481 aa).

It belongs to the ATP-dependent AMP-binding enzyme family. MenE subfamily.

It catalyses the reaction 2-succinylbenzoate + ATP + CoA = 2-succinylbenzoyl-CoA + AMP + diphosphate. The protein operates within quinol/quinone metabolism; 1,4-dihydroxy-2-naphthoate biosynthesis; 1,4-dihydroxy-2-naphthoate from chorismate: step 5/7. Its pathway is quinol/quinone metabolism; menaquinone biosynthesis. Converts 2-succinylbenzoate (OSB) to 2-succinylbenzoyl-CoA (OSB-CoA). In Bacillus cytotoxicus (strain DSM 22905 / CIP 110041 / 391-98 / NVH 391-98), this protein is 2-succinylbenzoate--CoA ligase.